A 220-amino-acid chain; its full sequence is Zinc finger protein 36 (220 aa).

The C2H2-type 1 zinc finger occupies 73–95 (FRCTVCGKAFASYQALGGHKSSH). Residues 90–134 (GHKSSHRKPPSPGDHYGAAAAAQQLASAGDSKEDSASSAAGSTGP) form a disordered region. Residues 107–117 (AAAAAQQLASA) show a composition bias toward low complexity. The C2H2-type 2 zinc-finger motif lies at 135–157 (HRCTICRRSFATGQALGGHKRCH).

Functionally, probable transcription factor involved in abscisic acid (ABA) signaling. Required for the regulation of the cross-talk between NADPH oxidase, hydrogen peroxide and MAP kinase in ABA signaling. Regulates the expression of the NADPH oxidase genes RBOHB and RBOHE, and the MAPK genes MPK1, MPK4, MPK5, MPK7 and MPK14. Regulates ABA-induced hydrogen peroxide production and antioxidant defense. Required for tolerance to water stress and oxidative stress. This chain is Zinc finger protein 36, found in Oryza sativa subsp. japonica (Rice).